We begin with the raw amino-acid sequence, 266 residues long: MLRFLVFASLVLYGHSTQDFPETNARVVGGAEARRNSWPSQISLQYLSGGSWYHTCGGTLIRRNWVMTAAHCVSSQMTFRVVVGDHNLSQNDGTEQYVSVQKIMVHPTWNSNNVAAGYDIALLRLAQSVTLNNYVQLAVLPQEGTILANNNPCYITGWGRTRTNGQLSQTLQQAYLPSVDYSICSSSSYWGSTVKTTMVCAGGDGVRSGCQGDSGGPLHCLVNGQYSVHGVTSFVSSMGCNVSKKPTVFTRVSAYISWMNNVIAYT.

The first 16 residues, 1–16, serve as a signal peptide directing secretion; sequence MLRFLVFASLVLYGHS. A propeptide spans 17–26 (activation peptide); it reads TQDFPETNAR. Positions 27–264 constitute a Peptidase S1 domain; it reads VVGGAEARRN…YISWMNNVIA (238 aa). A disulfide bridge connects residues Cys-56 and Cys-72. Residue His-71 is the Charge relay system of the active site. Asp-85, Asn-87, Gln-90, and Glu-95 together coordinate Ca(2+). The active-site Charge relay system is Asp-119. Intrachain disulfides connect Cys-153–Cys-220, Cys-184–Cys-200, and Cys-210–Cys-240. The active-site Charge relay system is the Ser-214.

Belongs to the peptidase S1 family. Elastase subfamily. Ca(2+) serves as cofactor. Pancreas.

The protein localises to the secreted. The enzyme catalyses Hydrolysis of proteins, including elastin. Preferential cleavage: Ala-|-Xaa.. Functionally, serine proteases that hydrolyze many proteins in addition to elastin. This chain is Chymotrypsin-like elastase family member 1 (Cela1), found in Rattus norvegicus (Rat).